The primary structure comprises 519 residues: Acetylcholine receptor subunit gamma (519 aa).

Residues 1 to 22 (MQGGQRPHLLLLLLAVCLGAQS) form the signal peptide. The Extracellular portion of the chain corresponds to 23–240 (RNQEERLLAD…VVFYLLIQRK (218 aa)). N-linked (GlcNAc...) asparagine glycans are attached at residues asparagine 52 and asparagine 163. Residues cysteine 150 and cysteine 164 are joined by a disulfide bond. Helical transmembrane passes span 241–265 (PLFYVINIIAPCVLISSVAILIYFL), 274–292 (CTVATNVLLAQTVFLFLVA), and 308–329 (YLTFLMVVTILIVVNSVVVLNV). Residues 330–476 (SLRSPHTHSM…WLLVGRVLDR (147 aa)) are Cytoplasmic-facing. The chain crosses the membrane as a helical span at residues 477 to 497 (VCFLAMLSLFICGTAGIFLMA).

Belongs to the ligand-gated ion channel (TC 1.A.9) family. Acetylcholine receptor (TC 1.A.9.1) subfamily. Gamma/CHRNG sub-subfamily. Pentamer of two alpha chains, and one each of the beta, delta, and gamma (in immature muscle) or epsilon (in mature muscle) chains. At least in myotubes of skeletal muscle.

It is found in the postsynaptic cell membrane. The protein resides in the cell membrane. The catalysed reaction is K(+)(in) = K(+)(out). It carries out the reaction Na(+)(in) = Na(+)(out). Functionally, after binding acetylcholine, the AChR responds by an extensive change in conformation that affects all subunits and leads to opening of an ion-conducting channel across the plasma membrane. The chain is Acetylcholine receptor subunit gamma (Chrng) from Mus musculus (Mouse).